Reading from the N-terminus, the 276-residue chain is Malectin-B (276 aa).

Residues 1-26 (MLSIRTVLGPLAAILLTVIGPFGAHG) form the signal peptide. Residues 27 to 253 (SGLADKVMWA…TPNPYASDNS (227 aa)) lie on the Lumenal side of the membrane. A carbohydrate is bound by residues Tyr67, Tyr89, Tyr116, Phe117, and Asp186. The tract at residues 202 to 249 (DVPQLQPHPGLEKKEEEEEEEEEEGSPSKKQSNKNRVQSGPRTPNPYA) is disordered. Positions 216-226 (EEEEEEEEEEG) are enriched in acidic residues. Polar residues predominate over residues 229-249 (SKKQSNKNRVQSGPRTPNPYA). An N-linked (GlcNAc...) asparagine glycan is attached at Asn252. The chain crosses the membrane as a helical span at residues 254-274 (SLMFPILVAFGVFIPTLFCLC). Over 275–276 (RL) the chain is Cytoplasmic.

The protein belongs to the malectin family.

Its subcellular location is the endoplasmic reticulum membrane. Carbohydrate-binding protein with a strong ligand preference for Glc2-N-glycan. May play a role in the early steps of protein N-glycosylation. Can bind di- or higher oligomers but not monomers of glucose, including maltose, maltotriose, maltotetraose, maltoheptaose, nigerose, kojibose, cellobiose and isomaltose, although based on their subcellular locations, these are unlikely to all be physiological ligands. This Xenopus laevis (African clawed frog) protein is Malectin-B.